The chain runs to 59 residues: Large ribosomal subunit protein uL30 (59 aa).

Belongs to the universal ribosomal protein uL30 family. As to quaternary structure, part of the 50S ribosomal subunit.

The sequence is that of Large ribosomal subunit protein uL30 from Lactococcus lactis subsp. lactis (strain IL1403) (Streptococcus lactis).